The chain runs to 252 residues: 2-succinyl-6-hydroxy-2,4-cyclohexadiene-1-carboxylate synthase (252 aa).

This sequence belongs to the AB hydrolase superfamily. MenH family. As to quaternary structure, monomer.

The catalysed reaction is 5-enolpyruvoyl-6-hydroxy-2-succinyl-cyclohex-3-ene-1-carboxylate = (1R,6R)-6-hydroxy-2-succinyl-cyclohexa-2,4-diene-1-carboxylate + pyruvate. It participates in quinol/quinone metabolism; 1,4-dihydroxy-2-naphthoate biosynthesis; 1,4-dihydroxy-2-naphthoate from chorismate: step 3/7. Its pathway is quinol/quinone metabolism; menaquinone biosynthesis. Its function is as follows. Catalyzes a proton abstraction reaction that results in 2,5-elimination of pyruvate from 2-succinyl-5-enolpyruvyl-6-hydroxy-3-cyclohexene-1-carboxylate (SEPHCHC) and the formation of 2-succinyl-6-hydroxy-2,4-cyclohexadiene-1-carboxylate (SHCHC). This Escherichia fergusonii (strain ATCC 35469 / DSM 13698 / CCUG 18766 / IAM 14443 / JCM 21226 / LMG 7866 / NBRC 102419 / NCTC 12128 / CDC 0568-73) protein is 2-succinyl-6-hydroxy-2,4-cyclohexadiene-1-carboxylate synthase.